The chain runs to 247 residues: L-cystine import ATP-binding protein TcyC (247 aa).

In terms of domain architecture, ABC transporter spans 2–240 (LTVKGLNKSF…PKEERTQRFL (239 aa)). 34–41 (GPSGSGKT) is a binding site for ATP.

The protein belongs to the ABC transporter superfamily. L-cystine importer (TC 3.A.1.3.14) family. The complex is composed of two ATP-binding proteins (TcyC), two transmembrane proteins (TcyB) and a solute-binding protein (TcyA).

It is found in the cell membrane. In terms of biological role, part of the ABC transporter complex TcyABC involved in L-cystine import. Responsible for energy coupling to the transport system. The sequence is that of L-cystine import ATP-binding protein TcyC (tcyC) from Bacillus subtilis (strain 168).